The chain runs to 336 residues: Holliday junction branch migration complex subunit RuvB (336 aa).

The segment at 1–182 (MKERIVNLET…FGMSFRMQFY (182 aa)) is large ATPase domain (RuvB-L). ATP is bound by residues Leu-21, Arg-22, Gly-63, Lys-66, Thr-67, Ser-68, 129 to 131 (EDF), Arg-172, Tyr-182, and Arg-219. Thr-67 is a Mg(2+) binding site. Positions 183-253 (SPSELALIIK…ITLHALNELG (71 aa)) are small ATPAse domain (RuvB-S). The interval 256–336 (ELGFDEADLA…IPTLKSQTLF (81 aa)) is head domain (RuvB-H). Positions 310 and 315 each coordinate DNA.

It belongs to the RuvB family. In terms of assembly, homohexamer. Forms an RuvA(8)-RuvB(12)-Holliday junction (HJ) complex. HJ DNA is sandwiched between 2 RuvA tetramers; dsDNA enters through RuvA and exits via RuvB. An RuvB hexamer assembles on each DNA strand where it exits the tetramer. Each RuvB hexamer is contacted by two RuvA subunits (via domain III) on 2 adjacent RuvB subunits; this complex drives branch migration. In the full resolvosome a probable DNA-RuvA(4)-RuvB(12)-RuvC(2) complex forms which resolves the HJ.

It localises to the cytoplasm. The catalysed reaction is ATP + H2O = ADP + phosphate + H(+). In terms of biological role, the RuvA-RuvB-RuvC complex processes Holliday junction (HJ) DNA during genetic recombination and DNA repair, while the RuvA-RuvB complex plays an important role in the rescue of blocked DNA replication forks via replication fork reversal (RFR). RuvA specifically binds to HJ cruciform DNA, conferring on it an open structure. The RuvB hexamer acts as an ATP-dependent pump, pulling dsDNA into and through the RuvAB complex. RuvB forms 2 homohexamers on either side of HJ DNA bound by 1 or 2 RuvA tetramers; 4 subunits per hexamer contact DNA at a time. Coordinated motions by a converter formed by DNA-disengaged RuvB subunits stimulates ATP hydrolysis and nucleotide exchange. Immobilization of the converter enables RuvB to convert the ATP-contained energy into a lever motion, pulling 2 nucleotides of DNA out of the RuvA tetramer per ATP hydrolyzed, thus driving DNA branch migration. The RuvB motors rotate together with the DNA substrate, which together with the progressing nucleotide cycle form the mechanistic basis for DNA recombination by continuous HJ branch migration. Branch migration allows RuvC to scan DNA until it finds its consensus sequence, where it cleaves and resolves cruciform DNA. This Helicobacter pylori (strain HPAG1) protein is Holliday junction branch migration complex subunit RuvB.